The primary structure comprises 174 residues: Protein GrpE (174 aa).

This sequence belongs to the GrpE family. Homodimer.

Its subcellular location is the cytoplasm. In terms of biological role, participates actively in the response to hyperosmotic and heat shock by preventing the aggregation of stress-denatured proteins, in association with DnaK and GrpE. It is the nucleotide exchange factor for DnaK and may function as a thermosensor. Unfolded proteins bind initially to DnaJ; upon interaction with the DnaJ-bound protein, DnaK hydrolyzes its bound ATP, resulting in the formation of a stable complex. GrpE releases ADP from DnaK; ATP binding to DnaK triggers the release of the substrate protein, thus completing the reaction cycle. Several rounds of ATP-dependent interactions between DnaJ, DnaK and GrpE are required for fully efficient folding. In Methanothermobacter thermautotrophicus (strain ATCC 29096 / DSM 1053 / JCM 10044 / NBRC 100330 / Delta H) (Methanobacterium thermoautotrophicum), this protein is Protein GrpE.